Consider the following 257-residue polypeptide: UPF0246 protein CLL_A2361 (257 aa).

Belongs to the UPF0246 family.

The polypeptide is UPF0246 protein CLL_A2361 (Clostridium botulinum (strain Eklund 17B / Type B)).